The primary structure comprises 84 residues: Large ribosomal subunit protein bL31B (84 aa).

It belongs to the bacterial ribosomal protein bL31 family. Type B subfamily. In terms of assembly, part of the 50S ribosomal subunit.

Its function is as follows. Binds the 23S rRNA. In Rhodococcus jostii (strain RHA1), this protein is Large ribosomal subunit protein bL31B.